A 494-amino-acid chain; its full sequence is Amidophosphoribosyltransferase (494 aa).

Positions 1–10 (MFNYSGLNEE) are excised as a propeptide. C11 (nucleophile) is an active-site residue. The region spanning 11–231 (CGVFGIWNHP…AGEYVVINDK (221 aa)) is the Glutamine amidotransferase type-2 domain. Residues S294, D356, and D357 each coordinate Mg(2+).

In the C-terminal section; belongs to the purine/pyrimidine phosphoribosyltransferase family. Mg(2+) is required as a cofactor.

It catalyses the reaction 5-phospho-beta-D-ribosylamine + L-glutamate + diphosphate = 5-phospho-alpha-D-ribose 1-diphosphate + L-glutamine + H2O. The protein operates within purine metabolism; IMP biosynthesis via de novo pathway; N(1)-(5-phospho-D-ribosyl)glycinamide from 5-phospho-alpha-D-ribose 1-diphosphate: step 1/2. Its function is as follows. Catalyzes the formation of phosphoribosylamine from phosphoribosylpyrophosphate (PRPP) and glutamine. In Staphylococcus aureus (strain Mu50 / ATCC 700699), this protein is Amidophosphoribosyltransferase.